Here is a 285-residue protein sequence, read N- to C-terminus: Polyamine aminopropyltransferase (285 aa).

The PABS domain occupies 2 to 237 (QMWFSQYHTV…GYWLFGFASK (236 aa)). Gln31 serves as a coordination point for S-methyl-5'-thioadenosine. Residue Asp86 participates in spermidine binding. Residues Glu106 and 137–138 (DG) contribute to the S-methyl-5'-thioadenosine site. Asp155 serves as the catalytic Proton acceptor. Position 155–158 (155–158 (DSTD)) interacts with spermidine.

The protein belongs to the spermidine/spermine synthase family. Homodimer or homotetramer.

Its subcellular location is the cytoplasm. The enzyme catalyses S-adenosyl 3-(methylsulfanyl)propylamine + putrescine = S-methyl-5'-thioadenosine + spermidine + H(+). It participates in amine and polyamine biosynthesis; spermidine biosynthesis; spermidine from putrescine: step 1/1. In terms of biological role, catalyzes the irreversible transfer of a propylamine group from the amino donor S-adenosylmethioninamine (decarboxy-AdoMet) to putrescine (1,4-diaminobutane) to yield spermidine. This is Polyamine aminopropyltransferase from Agathobacter rectalis (strain ATCC 33656 / DSM 3377 / JCM 17463 / KCTC 5835 / VPI 0990) (Eubacterium rectale).